The primary structure comprises 414 residues: Bystin (414 aa).

The segment covering 1–11 (MSAKRNTKLRH) has biased composition (basic residues). Residues 1 to 91 (MSAKRNTKLR…PSDDEGQADD (91 aa)) are disordered. Residues 12 to 24 (APLEHAYVDDKSV) show a composition bias toward basic and acidic residues. Residues 25-34 (RRNKRSKQRG) show a composition bias toward basic residues.

This sequence belongs to the bystin family.

Its subcellular location is the nucleus. The protein resides in the nucleolus. Required for processing of 20S pre-rRNA precursor and biogenesis of 40S ribosomal subunits. This is Bystin (bysl) from Monosiga brevicollis (Choanoflagellate).